The sequence spans 68 residues: Large ribosomal subunit protein bL35 (68 aa).

The protein belongs to the bacterial ribosomal protein bL35 family.

The protein is Large ribosomal subunit protein bL35 of Rickettsia felis (strain ATCC VR-1525 / URRWXCal2) (Rickettsia azadi).